The chain runs to 142 residues: Transcription antitermination protein NusB (142 aa).

Belongs to the NusB family. In terms of assembly, monomer or homodimer; in equilibrium, with a preference for the monomer. Dimerization may be employed to package NusB in an inactive form until recruitment into antitermination complexes.

Functionally, involved in transcription antitermination. Required for transcription of ribosomal RNA (rRNA) genes. Binds specifically to the boxA antiterminator sequence of the ribosomal RNA (rrn) operons. The polypeptide is Transcription antitermination protein NusB (Thermotoga maritima (strain ATCC 43589 / DSM 3109 / JCM 10099 / NBRC 100826 / MSB8)).